Here is a 168-residue protein sequence, read N- to C-terminus: G/U mismatch-specific DNA glycosylase (168 aa).

It belongs to the uracil-DNA glycosylase (UDG) superfamily. TDG/mug family. In terms of assembly, binds DNA as a monomer.

It localises to the cytoplasm. The enzyme catalyses Specifically hydrolyzes mismatched double-stranded DNA and polynucleotides, releasing free uracil.. Functionally, excises ethenocytosine and uracil, which can arise by alkylation or deamination of cytosine, respectively, from the corresponding mispairs with guanine in ds-DNA. It is capable of hydrolyzing the carbon-nitrogen bond between the sugar-phosphate backbone of the DNA and the mispaired base. The complementary strand guanine functions in substrate recognition. Required for DNA damage lesion repair in stationary-phase cells. This is G/U mismatch-specific DNA glycosylase from Escherichia coli O139:H28 (strain E24377A / ETEC).